A 311-amino-acid polypeptide reads, in one-letter code: Ribosomal protein L11 methyltransferase (311 aa).

Positions 162, 183, 205, and 248 each coordinate S-adenosyl-L-methionine.

This sequence belongs to the methyltransferase superfamily. PrmA family.

It localises to the cytoplasm. It carries out the reaction L-lysyl-[protein] + 3 S-adenosyl-L-methionine = N(6),N(6),N(6)-trimethyl-L-lysyl-[protein] + 3 S-adenosyl-L-homocysteine + 3 H(+). Methylates ribosomal protein L11. The sequence is that of Ribosomal protein L11 methyltransferase from Bacillus subtilis (strain 168).